Consider the following 1288-residue polypeptide: Mitogen-activated protein kinase kinase kinase 6 (1288 aa).

Positions 648–906 (TGERLVLGKG…AQTLLGDPFL (259 aa)) constitute a Protein kinase domain. ATP contacts are provided by residues 654–662 (LGKGTYGVV) and Lys-677. The Proton acceptor role is filled by Asp-771. Residue Thr-806 is modified to Phosphothreonine. A disordered region spans residues 899–997 (TLLGDPFLQP…SSGLSLLHQE (99 aa)). Residues 914–952 (SPSSPRHAPRPSDAPSASPTPSANSTTQSQTFPCPQAPS) are compositionally biased toward low complexity. Residues Ser-964 and Ser-984 each carry the phosphoserine modification. The segment covering 980–989 (EEPASPEESS) has biased composition (low complexity). Positions 1004 to 1029 (LAAVLEQELPALAENLHQEQKQEQGA) form a coiled coil. The segment covering 1123–1134 (VEKEAVSPRSEE) has biased composition (basic and acidic residues). The segment at 1123 to 1157 (VEKEAVSPRSEELSNEGDSQQSPGQQSPLPVEPEQ) is disordered. Residues Ser-1129 and Ser-1149 each carry the phosphoserine modification. A compositionally biased stretch (low complexity) spans 1141–1151 (SQQSPGQQSPL). Residues 1166-1205 (LSLLRAETDRLREILAGKEREYQALVQRALQRLNEEARTY) adopt a coiled-coil conformation.

The protein belongs to the protein kinase superfamily. STE Ser/Thr protein kinase family. MAP kinase kinase kinase subfamily. Binds both upstream activators and downstream substrates in multimolecular complexes. Mg(2+) is required as a cofactor.

The enzyme catalyses L-seryl-[protein] + ATP = O-phospho-L-seryl-[protein] + ADP + H(+). It catalyses the reaction L-threonyl-[protein] + ATP = O-phospho-L-threonyl-[protein] + ADP + H(+). Its activity is regulated as follows. Activated by phosphorylation on Thr-806. Catalytically active only when complexed with MAP3K5, with MAP3K5 supporting the stability and the active configuration of MAP3K6 and MAP3K6 activating MAP3K5 by direct phosphorylation. Its function is as follows. Component of a protein kinase signal transduction cascade. Activates the JNK, but not ERK or p38 kinase pathways. The polypeptide is Mitogen-activated protein kinase kinase kinase 6 (MAP3K6) (Homo sapiens (Human)).